The sequence spans 545 residues: E3 ubiquitin-protein ligase ipaH9.8 (545 aa).

The segment at 1 to 242 (MLPINNNFSL…YHGPRIYFSM (242 aa)) is interaction with target proteins. LRR repeat units follow at residues 57 to 77 (NSDELRLDRLNLSSLPDNLPA), 78 to 99 (QITLLNVSYNQLTNLPELPVTL), 100 to 117 (KKLYSASNKLSELPVLPP), 118 to 139 (ALESLQVQHNELENLPALPDSL), 140 to 157 (LTMNISYNEIVSLPSLPQ), 158 to 179 (ALKNLRATRNFLTELPAFSEGN), 182 to 203 (VVREYFFDRNQISHIPESILNL), and 205 to 228 (NECSIHISDNPLSSHALPALQRLT). Residues 243-250 (SDGQQNTL) are linker. An E3 ubiquitin-protein ligase catalytic domain region spans residues 251–545 (HRPLADAVTA…PENGSQLHHS (295 aa)). The NEL domain maps to 253–545 (PLADAVTAWF…PENGSQLHHS (293 aa)). The active-site Glycyl thioester intermediate is the C337.

The protein belongs to the LRR-containing bacterial E3 ligase family. As to quaternary structure, also interacts with human and mouse U2AF1 (U2AF35). Post-translationally, autoubiquitinated (in vitro). Ubiquitinated in the presence of host E1 ubiquitin-activating enzyme, E2 ubiquitin-conjugating enzyme and ubiquitin.

It is found in the secreted. The protein localises to the host cytoplasm. The protein resides in the host nucleus. The enzyme catalyses S-ubiquitinyl-[E2 ubiquitin-conjugating enzyme]-L-cysteine + [acceptor protein]-L-lysine = [E2 ubiquitin-conjugating enzyme]-L-cysteine + N(6)-ubiquitinyl-[acceptor protein]-L-lysine.. The protein operates within protein modification; protein ubiquitination. Its activity is regulated as follows. Exists in an autoinhibited state in the absence of substrate protein, due to interactions of the leucine-rich repeats with NEL domain. Is activated upon binding to a substrate protein. Effector E3 ubiquitin ligase that interferes with host's ubiquitination pathway and modulates the acute inflammatory responses, thus facilitating bacterial colonization within the host cell. Interacts with IKBKG (NEMO) and TNIP1 (ABIN-1), a ubiquitin-binding adapter protein, which results in TNIP1-dependent 'Lys-27'-linked polyubiquitination of IKBKG. Consequently, polyubiquitinated IKBKG undergoes proteasome-dependent degradation, which perturbs NF-kappa-B activation during bacterial infection. Mediates polyubiquitination of host U2AF1, leading to its proteasomal degradation. Catalyzes 'Lys-48'-linked polyubiquitination and subsequent degradation of a subset of host guanylate-binding proteins (GBP1, GBP2, GBP4 and GBP6), thereby suppressing host cell defense. In contrast, host GBP3 and GBP7 are not ubiquitinated by IpaH9.8. Uses UBE2D2 (UBCH5B) as an E2 ubiquitin-conjugating enzyme. This chain is E3 ubiquitin-protein ligase ipaH9.8, found in Shigella flexneri.